A 480-amino-acid chain; its full sequence is Cysteine--tRNA ligase (480 aa).

Residue C27 participates in Zn(2+) binding. The short motif at 29–39 is the 'HIGH' region element; the sequence is PTVYNYAHIGN. C221, H246, and E250 together coordinate Zn(2+). The 'KMSKS' region motif lies at 278-282; it reads KMSKS. K281 contacts ATP.

It belongs to the class-I aminoacyl-tRNA synthetase family. As to quaternary structure, monomer. The cofactor is Zn(2+).

The protein localises to the cytoplasm. It catalyses the reaction tRNA(Cys) + L-cysteine + ATP = L-cysteinyl-tRNA(Cys) + AMP + diphosphate. The protein is Cysteine--tRNA ligase of Borrelia garinii subsp. bavariensis (strain ATCC BAA-2496 / DSM 23469 / PBi) (Borreliella bavariensis).